The primary structure comprises 262 residues: Phosphate import ATP-binding protein PstB (262 aa).

The 242-residue stretch at 16–257 (IDVRNLNFYY…PHRKETEDYI (242 aa)) folds into the ABC transporter domain. 48–55 (GPSGCGKS) contacts ATP.

The protein belongs to the ABC transporter superfamily. Phosphate importer (TC 3.A.1.7) family. As to quaternary structure, the complex is composed of two ATP-binding proteins (PstB), two transmembrane proteins (PstC and PstA) and a solute-binding protein (PstS).

It is found in the cell inner membrane. The catalysed reaction is phosphate(out) + ATP + H2O = ADP + 2 phosphate(in) + H(+). Functionally, part of the ABC transporter complex PstSACB involved in phosphate import. Responsible for energy coupling to the transport system. This Cupriavidus pinatubonensis (strain JMP 134 / LMG 1197) (Cupriavidus necator (strain JMP 134)) protein is Phosphate import ATP-binding protein PstB.